A 410-amino-acid polypeptide reads, in one-letter code: Ribulose bisphosphate carboxylase large chain (410 aa).

2 residues coordinate substrate: Asn100 and Thr150. Lys152 functions as the Proton acceptor in the catalytic mechanism. Residue Lys154 participates in substrate binding. Mg(2+) is bound by residues Lys178, Asp180, and Glu181. Lys178 carries the N6-carboxylysine modification. His271 functions as the Proton acceptor in the catalytic mechanism. Substrate-binding residues include Arg272, His304, and Ser356.

The protein belongs to the RuBisCO large chain family. Type I subfamily. As to quaternary structure, heterohexadecamer of 8 large chains and 8 small chains; disulfide-linked. The disulfide link is formed within the large subunit homodimers. The cofactor is Mg(2+). The disulfide bond which can form in the large chain dimeric partners within the hexadecamer appears to be associated with oxidative stress and protein turnover.

It localises to the plastid. Its subcellular location is the chloroplast. It catalyses the reaction 2 (2R)-3-phosphoglycerate + 2 H(+) = D-ribulose 1,5-bisphosphate + CO2 + H2O. The catalysed reaction is D-ribulose 1,5-bisphosphate + O2 = 2-phosphoglycolate + (2R)-3-phosphoglycerate + 2 H(+). In terms of biological role, ruBisCO catalyzes two reactions: the carboxylation of D-ribulose 1,5-bisphosphate, the primary event in carbon dioxide fixation, as well as the oxidative fragmentation of the pentose substrate in the photorespiration process. Both reactions occur simultaneously and in competition at the same active site. This chain is Ribulose bisphosphate carboxylase large chain (rbcL), found in Gleichenia japonica (Urajiro).